The following is a 618-amino-acid chain: Cationic amino acid transporter 3 (618 aa).

At 1-36 (MLWQALRRFGQKLVRRRVLELGMGETRLARCLSTLD) the chain is on the cytoplasmic side. A helical transmembrane segment spans residues 37–57 (LVALGVGSTLGAGVYVLAGEV). Over 58–61 (AKDK) the chain is Extracellular. A helical transmembrane segment spans residues 62 to 82 (AGPSIVICFLVAALSSVLAGL). The Cytoplasmic portion of the chain corresponds to 83–107 (CYAEFGARVPGSGSAYLYSYVTVGE). A helical membrane pass occupies residues 108–128 (LWAFTTGWNLILSYVIGTASV). Residues 129–162 (ARAWSSAFDNLIGNHISRTLKGTILLKMPHVLAE) are Extracellular-facing. A helical membrane pass occupies residues 163-183 (YPDFFALALVLLLTGLLVLGA). Residues 184–191 (SKSALVTK) are Cytoplasmic-facing. The helical transmembrane segment at 192 to 212 (VFTGMNLLVLSFVIISGFIKG) threads the bilayer. The Extracellular portion of the chain corresponds to 213–244 (ELRNWKLTKEDYCLTMSESNGTCSLDSMGSGG). Asn232 carries an N-linked (GlcNAc...) asparagine glycan. Residues 245-265 (FMPFGLEGILRGAATCFYAFV) traverse the membrane as a helical segment. Residues 266–285 (GFDCIATTGEEAQNPQRSIP) lie on the Cytoplasmic side of the membrane. The helical transmembrane segment at 286–306 (MGIVISMFICFLAYFGVSSAL) threads the bilayer. At 307–335 (TLMMPYYKLHPESPLPEAFSYVGWEPARY) the chain is on the extracellular side. Residues 336 to 356 (LVAIGSLCALSTSLLGSMFPM) traverse the membrane as a helical segment. The Cytoplasmic segment spans residues 357–380 (PRVMYSMAEDGLLFRVLAKVHSVT). Residues 381-401 (HIPIVATLVSGVIAAFMAFLF) traverse the membrane as a helical segment. At 402 to 406 (ELTDL) the chain is on the extracellular side. Residues 407–427 (VDLMSIGTLLAHSLVSICVLI) traverse the membrane as a helical segment. Residues 428–474 (LRYQPDQEMKSVEEEMELQEETLEAEKLTVQALFCPVNSIPTLLSGR) lie on the Cytoplasmic side of the membrane. A helical membrane pass occupies residues 475–495 (VVYVCSSLLAVLLTVLCLVLT). Topologically, residues 496 to 506 (WWTTPLRSGDP) are extracellular. The helical transmembrane segment at 507-527 (VWVTVVVLILGLILAISGVIW) threads the bilayer. Topologically, residues 528 to 539 (RQPQNRTPLHFK) are cytoplasmic. The helical transmembrane segment at 540–560 (VPAVPLLPLVSIFVNVYLMMQ) threads the bilayer. Residues 561-568 (MTAGTWAR) are Extracellular-facing. The chain crosses the membrane as a helical span at residues 569–589 (FGIWMLIGFAIYFGYGIQHSM). At 590–618 (KEVKNHQTLPKTRAQTIDLDLTTSCVHSI) the chain is on the cytoplasmic side. Phosphothreonine is present on Thr605. Position 617 is a phosphoserine (Ser617).

Belongs to the amino acid-polyamine-organocation (APC) superfamily. Cationic amino acid transporter (CAT) (TC 2.A.3.3) family. In terms of processing, N-glycosylated. In terms of tissue distribution, expressed in adult brain and in a wide variety of embryonic tissues.

The protein resides in the cell membrane. The enzyme catalyses L-arginine(in) = L-arginine(out). It carries out the reaction L-lysine(in) = L-lysine(out). The catalysed reaction is L-ornithine(in) = L-ornithine(out). Functionally, uniporter that mediates the uptake of cationic L-amino acids such as L-arginine, L-lysine and L-ornithine. The transport is sodium ions- and pH-independent, moderately trans-stimulated and is mediated by passive diffusion. The sequence is that of Cationic amino acid transporter 3 from Mus musculus (Mouse).